The chain runs to 614 residues: Dihydroxy-acid dehydratase 1 (614 aa).

Residue Asp81 participates in Mg(2+) binding. Residue Cys122 participates in [2Fe-2S] cluster binding. Residues Asp123 and Lys124 each contribute to the Mg(2+) site. N6-carboxylysine is present on Lys124. Residue Cys195 coordinates [2Fe-2S] cluster. Mg(2+) is bound at residue Glu491. Residue Ser517 is the Proton acceptor of the active site.

The protein belongs to the IlvD/Edd family. Homodimer. [2Fe-2S] cluster serves as cofactor. The cofactor is Mg(2+).

It carries out the reaction (2R)-2,3-dihydroxy-3-methylbutanoate = 3-methyl-2-oxobutanoate + H2O. The enzyme catalyses (2R,3R)-2,3-dihydroxy-3-methylpentanoate = (S)-3-methyl-2-oxopentanoate + H2O. The protein operates within amino-acid biosynthesis; L-isoleucine biosynthesis; L-isoleucine from 2-oxobutanoate: step 3/4. Its pathway is amino-acid biosynthesis; L-valine biosynthesis; L-valine from pyruvate: step 3/4. Its function is as follows. Functions in the biosynthesis of branched-chain amino acids. Catalyzes the dehydration of (2R,3R)-2,3-dihydroxy-3-methylpentanoate (2,3-dihydroxy-3-methylvalerate) into 2-oxo-3-methylpentanoate (2-oxo-3-methylvalerate) and of (2R)-2,3-dihydroxy-3-methylbutanoate (2,3-dihydroxyisovalerate) into 2-oxo-3-methylbutanoate (2-oxoisovalerate), the penultimate precursor to L-isoleucine and L-valine, respectively. The polypeptide is Dihydroxy-acid dehydratase 1 (Mesorhizobium japonicum (strain LMG 29417 / CECT 9101 / MAFF 303099) (Mesorhizobium loti (strain MAFF 303099))).